Reading from the N-terminus, the 249-residue chain is Cytochrome c oxidase subunit 2 (249 aa).

A run of 2 helical transmembrane segments spans residues 40–60 (NIMFYLLVILGLVSWMLYTIT) and 81–101 (IIWTIFPAVVLLIIAFPSFIL). Residues histidine 184, cysteine 219, glutamate 221, cysteine 223, histidine 227, and methionine 230 each contribute to the Cu cation site. Glutamate 221 provides a ligand contact to Mg(2+).

Belongs to the cytochrome c oxidase subunit 2 family. In terms of assembly, component of the cytochrome c oxidase (complex IV, CIV), a multisubunit enzyme composed of a catalytic core of 3 subunits and several supernumerary subunits. The complex exists as a monomer or a dimer and forms supercomplexes (SCs) in the inner mitochondrial membrane with ubiquinol-cytochrome c oxidoreductase (cytochrome b-c1 complex, complex III, CIII). Cu cation is required as a cofactor.

The protein localises to the mitochondrion inner membrane. The enzyme catalyses 4 Fe(II)-[cytochrome c] + O2 + 8 H(+)(in) = 4 Fe(III)-[cytochrome c] + 2 H2O + 4 H(+)(out). Component of the cytochrome c oxidase, the last enzyme in the mitochondrial electron transport chain which drives oxidative phosphorylation. The respiratory chain contains 3 multisubunit complexes succinate dehydrogenase (complex II, CII), ubiquinol-cytochrome c oxidoreductase (cytochrome b-c1 complex, complex III, CIII) and cytochrome c oxidase (complex IV, CIV), that cooperate to transfer electrons derived from NADH and succinate to molecular oxygen, creating an electrochemical gradient over the inner membrane that drives transmembrane transport and the ATP synthase. Cytochrome c oxidase is the component of the respiratory chain that catalyzes the reduction of oxygen to water. Electrons originating from reduced cytochrome c in the intermembrane space (IMS) are transferred via the dinuclear copper A center (CU(A)) of subunit 2 and heme A of subunit 1 to the active site in subunit 1, a binuclear center (BNC) formed by heme A3 and copper B (CU(B)). The BNC reduces molecular oxygen to 2 water molecules using 4 electrons from cytochrome c in the IMS and 4 protons from the mitochondrial matrix. The protein is Cytochrome c oxidase subunit 2 (COX2) of Vanderwaltozyma polyspora (strain ATCC 22028 / DSM 70294 / BCRC 21397 / CBS 2163 / NBRC 10782 / NRRL Y-8283 / UCD 57-17) (Kluyveromyces polysporus).